Here is a 288-residue protein sequence, read N- to C-terminus: ATP synthase gamma chain (288 aa).

Belongs to the ATPase gamma chain family. In terms of assembly, F-type ATPases have 2 components, CF(1) - the catalytic core - and CF(0) - the membrane proton channel. CF(1) has five subunits: alpha(3), beta(3), gamma(1), delta(1), epsilon(1). CF(0) has three main subunits: a, b and c.

Its subcellular location is the cell membrane. Produces ATP from ADP in the presence of a proton gradient across the membrane. The gamma chain is believed to be important in regulating ATPase activity and the flow of protons through the CF(0) complex. This chain is ATP synthase gamma chain, found in Staphylococcus epidermidis (strain ATCC 35984 / DSM 28319 / BCRC 17069 / CCUG 31568 / BM 3577 / RP62A).